The sequence spans 36 residues: Peptide POLARIS (36 aa).

Belongs to the POLARIS peptide family. As to expression, mostly expressed in the embryonic root from the heart stage and in the seedling primary and lateral root tips, especially in the columella initials and lateral root cap. Also detectable in aerial parts of the seedling, sepals and leaves, principally in vascular tissues of the lamina and petiole.

Functionally, required for correct root growth and vascular development, probably by modulating both cell division rate in meristems and cell elongation in roots. Negative regulator of the ethylene signaling pathway that modulates microtubule cytoskeleton dynamics and auxin transport and homeostasis, and possibly cytokinin signaling, thus influencing root growth and lateral root development. This Arabidopsis thaliana (Mouse-ear cress) protein is Peptide POLARIS (PLS).